The following is an 89-amino-acid chain: MPLTQDRKQELIGTYQVHETDTGSPEVQVAMLSDRINQLTEHLRSHPKDFSSRRGLLKLIGRRKQLLAYLAANEADRYRALVDRLGLRR.

Belongs to the universal ribosomal protein uS15 family. As to quaternary structure, part of the 30S ribosomal subunit. Forms a bridge to the 50S subunit in the 70S ribosome, contacting the 23S rRNA.

Functionally, one of the primary rRNA binding proteins, it binds directly to 16S rRNA where it helps nucleate assembly of the platform of the 30S subunit by binding and bridging several RNA helices of the 16S rRNA. In terms of biological role, forms an intersubunit bridge (bridge B4) with the 23S rRNA of the 50S subunit in the ribosome. In Gloeobacter violaceus (strain ATCC 29082 / PCC 7421), this protein is Small ribosomal subunit protein uS15.